Here is a 116-residue protein sequence, read N- to C-terminus: Large ribosomal subunit protein uL18 (116 aa).

It belongs to the universal ribosomal protein uL18 family. Part of the 50S ribosomal subunit; part of the 5S rRNA/L5/L18/L25 subcomplex. Contacts the 5S and 23S rRNAs.

Functionally, this is one of the proteins that bind and probably mediate the attachment of the 5S RNA into the large ribosomal subunit, where it forms part of the central protuberance. This is Large ribosomal subunit protein uL18 from Shewanella sp. (strain ANA-3).